The sequence spans 471 residues: Probable multidrug-efflux transporter MT1670 (471 aa).

The next 14 membrane-spanning stretches (helical) occupy residues 23–43, 55–75, 91–111, 116–136, 146–166, 174–194, 213–233, 237–257, 279–299, 308–328, 337–357, 366–386, 410–430, and 438–458; these read IVLA…ISLL, LYAW…TTVN, LAVF…QILV, LQGI…NSTL, ALVS…GGLF, WAFG…PVAL, VPVW…VAAL, LVQT…FVVV, IYLT…VPLF, PVAA…GEVA, VIGH…ALGA, VGII…IGIA, AINV…GVVV, and VAAA…GVIA.

Belongs to the major facilitator superfamily.

The protein resides in the cell membrane. In terms of biological role, could be involved in fluoroquinolones efflux. In Mycobacterium tuberculosis (strain CDC 1551 / Oshkosh), this protein is Probable multidrug-efflux transporter MT1670.